The chain runs to 212 residues: Fe/S biogenesis protein NfuA (212 aa).

Residues Cys-169 and Cys-172 each contribute to the [4Fe-4S] cluster site.

It belongs to the NfuA family. As to quaternary structure, homodimer. [4Fe-4S] cluster serves as cofactor.

Its function is as follows. Involved in iron-sulfur cluster biogenesis. Binds a 4Fe-4S cluster, can transfer this cluster to apoproteins, and thereby intervenes in the maturation of Fe/S proteins. Could also act as a scaffold/chaperone for damaged Fe/S proteins. In Acinetobacter baumannii (strain AB307-0294), this protein is Fe/S biogenesis protein NfuA.